The sequence spans 208 residues: UPF0711 protein C18orf21 homolog (208 aa).

Over residues 123 to 137 (SKHKSTPGSASKHRT) the composition is skewed to basic residues. 2 disordered regions span residues 123–180 (SKHK…KSSP) and 189–208 (MLEN…LSSL). Residues 138 to 152 (PQTVNWATPKSVANR) show a composition bias toward polar residues. Low complexity predominate over residues 153–180 (TPSSTPRSASSNTSSSSSSKSSSVKSSP).

This sequence belongs to the UPF0711 family.

The sequence is that of UPF0711 protein C18orf21 homolog from Danio rerio (Zebrafish).